The sequence spans 353 residues: Protein Wnt-11b-1 (353 aa).

A signal peptide spans 1 to 22; it reads MAQIHHCVTLLLILCCSGLCGA. N-linked (GlcNAc...) asparagine glycosylation is found at N31, N38, and N88. Cystine bridges form between C78–C89, C128–C136, C138–C155, C208–C222, and C210–C217. S214 is lipidated: O-palmitoleoyl serine; by PORCN. Sulfotyrosine occurs at positions 274 and 281. Disulfide bonds link C282–C313, C298–C308, C312–C352, C328–C343, C330–C340, and C335–C336. Residue N299 is glycosylated (N-linked (GlcNAc...) asparagine).

It belongs to the Wnt family. Homodimer. Secreted homodimers form a complex with wnt5a homodimers; tyrosine sulfation of both wnt11 and wnt5a by tpst1 is required for this interaction. Interacts with the transmembrane receptor fzd7/fz7. Interacts with lrp6 and ryk. Interacts with tdgf1/frl1. Interacts weakly with frzb1 and strongly with frzb2/crescent. Interaction with frzb2/crescent antagonizes wnt11 function in the neuroectoderm, but enhances it in mesodermal tissue. In terms of processing, glycosylation is required for protein secretion. Palmitoleoylation is required for efficient binding to frizzled receptors. Depalmitoleoylation leads to Wnt signaling pathway inhibition.

The protein resides in the secreted. It localises to the extracellular space. It is found in the extracellular matrix. Functionally, ligand for the frizzled7 transmembrane receptor. Primarily acts via non-canonical Wnt pathways mediated by either Ca(2+) and PKC, or by JNK and dvl2/dsh. Depending on the cellular context, can also signal via the canonical Wnt pathway mediated by beta-catenin and dvl2/dsh. May also inhibit canonical Wnt signaling. Maternally initiates dorsal/ventral axis formation by a canonical route, which signals via lrp6. In a complex with wnt5a, activates the canonical and non-canonical processes involved in axis formation. In the non-canonical pathway, acts through fzd7/fz7 to induce phosphorylation of dvl2/dsh. Signals through a non-canonical Wnt pathway to regulate convergent extension movements during gastrulation. Interactions with the secreted Wnt antagonist sfrp5 to coordinate foregut development, acting via a non-canonical wnt pathway whereby sfrp5 restricts wnt11b activity to prevent inappropriate foregut formation. Mediates cardiogenesis via non-canonical Wnt signaling involving JNK-activation and PKC. Acts redundantly with wnt11/wnt11r during pronephros induction. The protein is Protein Wnt-11b-1 of Xenopus tropicalis (Western clawed frog).